The primary structure comprises 100 residues: uncharacterized protein (100 aa).

In terms of domain architecture, HTH arsR-type spans 8-100; that stretch reads MKQSDDQIRA…TYLPGFLETL (93 aa). Positions 44-67 form a DNA-binding region, H-T-H motif; the sequence is CGEVGEKCNIVKTTASYHFKTLRE.

This is an uncharacterized protein from Bacillus subtilis (strain 168).